Reading from the N-terminus, the 1125-residue chain is Transcription-repair-coupling factor (1125 aa).

The Helicase ATP-binding domain maps to Asp-597–Leu-758. ATP is bound at residue Gly-610–Thr-617. A DEEQ box motif is present at residues Asp-711–Gln-714. Residues Ser-774–Glu-933 enclose the Helicase C-terminal domain.

In the N-terminal section; belongs to the UvrB family. The protein in the C-terminal section; belongs to the helicase family. RecG subfamily.

Its subcellular location is the cytoplasm. Its function is as follows. Couples transcription and DNA repair by recognizing RNA polymerase (RNAP) stalled at DNA lesions. Mediates ATP-dependent release of RNAP and its truncated transcript from the DNA, and recruitment of nucleotide excision repair machinery to the damaged site. The chain is Transcription-repair-coupling factor from Borreliella burgdorferi (strain ATCC 35210 / DSM 4680 / CIP 102532 / B31) (Borrelia burgdorferi).